We begin with the raw amino-acid sequence, 321 residues long: uncharacterized protein (321 aa).

The active-site Proton donor is Tyr60. His118 is a binding site for substrate.

This sequence belongs to the aldo/keto reductase family.

This is an uncharacterized protein from Schizosaccharomyces pombe (strain 972 / ATCC 24843) (Fission yeast).